Reading from the N-terminus, the 514-residue chain is Peptide chain release factor 3 (514 aa).

One can recognise a tr-type G domain in the interval 8-268 (KKRRTFAIIS…TFLEFAPEPH (261 aa)). Residues 17-24 (SHPDAGKT), 85-89 (DTPGH), and 139-142 (NKLD) contribute to the GTP site.

Belongs to the TRAFAC class translation factor GTPase superfamily. Classic translation factor GTPase family. PrfC subfamily.

It is found in the cytoplasm. Increases the formation of ribosomal termination complexes and stimulates activities of RF-1 and RF-2. It binds guanine nucleotides and has strong preference for UGA stop codons. It may interact directly with the ribosome. The stimulation of RF-1 and RF-2 is significantly reduced by GTP and GDP, but not by GMP. This is Peptide chain release factor 3 from Streptococcus pyogenes serotype M2 (strain MGAS10270).